Consider the following 397-residue polypeptide: Golgi-associated RAB2 interactor protein 2 (397 aa).

Disordered stretches follow at residues Met-1–Lys-24 and Gln-342–Asn-397. 3 stretches are compositionally biased toward basic and acidic residues: residues Thr-10 to Lys-24, Glu-353 to Asp-369, and Lys-376 to Asn-397.

This sequence belongs to the GARIN family. In terms of assembly, interacts with CALM1.

The protein localises to the cell projection. It localises to the cilium. The protein resides in the flagellum. Seems to play a role in sperm motility. This is Golgi-associated RAB2 interactor protein 2 (GARIN2) from Bos taurus (Bovine).